Reading from the N-terminus, the 245-residue chain is 1-(5-phosphoribosyl)-5-[(5-phosphoribosylamino)methylideneamino] imidazole-4-carboxamide isomerase (245 aa).

Asp-8 (proton acceptor) is an active-site residue. Asp-130 (proton donor) is an active-site residue.

The protein belongs to the HisA/HisF family.

It localises to the cytoplasm. The enzyme catalyses 1-(5-phospho-beta-D-ribosyl)-5-[(5-phospho-beta-D-ribosylamino)methylideneamino]imidazole-4-carboxamide = 5-[(5-phospho-1-deoxy-D-ribulos-1-ylimino)methylamino]-1-(5-phospho-beta-D-ribosyl)imidazole-4-carboxamide. Its pathway is amino-acid biosynthesis; L-histidine biosynthesis; L-histidine from 5-phospho-alpha-D-ribose 1-diphosphate: step 4/9. The sequence is that of 1-(5-phosphoribosyl)-5-[(5-phosphoribosylamino)methylideneamino] imidazole-4-carboxamide isomerase from Ectopseudomonas mendocina (strain ymp) (Pseudomonas mendocina).